Consider the following 263-residue polypeptide: Phosphatidylglycerol--prolipoprotein diacylglyceryl transferase (263 aa).

4 helical membrane passes run 10-30 (VAITLGPLQFRWYGLMYLFGF), 56-76 (MVTYVILGVVLGGRIGYILFY), 91-111 (IWNGGMSFHGGLLGVVFAMWL), and 117-137 (GLGFMDVSDFVAPLIPPGLFF). Residue R139 coordinates a 1,2-diacyl-sn-glycero-3-phospho-(1'-sn-glycerol). A run of 3 helical transmembrane segments spans residues 171-191 (PSQLYECALEGVILFLALWVF), 199-219 (GHVSGLFALLYGVFRFTVEFV), and 231-251 (FGWLTMGQVLCLPLIMLGLWL).

It belongs to the Lgt family.

It is found in the cell inner membrane. The enzyme catalyses L-cysteinyl-[prolipoprotein] + a 1,2-diacyl-sn-glycero-3-phospho-(1'-sn-glycerol) = an S-1,2-diacyl-sn-glyceryl-L-cysteinyl-[prolipoprotein] + sn-glycerol 1-phosphate + H(+). The protein operates within protein modification; lipoprotein biosynthesis (diacylglyceryl transfer). Its function is as follows. Catalyzes the transfer of the diacylglyceryl group from phosphatidylglycerol to the sulfhydryl group of the N-terminal cysteine of a prolipoprotein, the first step in the formation of mature lipoproteins. The protein is Phosphatidylglycerol--prolipoprotein diacylglyceryl transferase of Nitratidesulfovibrio vulgaris (strain DP4) (Desulfovibrio vulgaris).